The sequence spans 1092 residues: MLHIKDLIWTLYFIGAAVALEVNIVPDQGEISLGESKFFLCQVSGEATDISWYSPTGEKLLNQQQISVVKNDEYTSTLTIYNVSSQDAGIYKCVASSETEGESEGTVNLKIYQKLTFKYAPTPQEFTEGEDAVIICDVSSSIPSIITWRHKGKDVIFKKDVRFVVLANNYLQIRGIKKTDEGNYRCEGRILARGEINYKDIQVIVNVPPLIQARQIRVNATANMDESVVLSCDADGFPDPEISWLKKGEPIEDGEEKISFNEDKSEMTIYRVEKEDEAEYSCIANNQAGEAEAIVLLKVYAKPKMTYVENKTTVELDEITLTCEASGDPIPSITWRTAHRNISSEEKTLDGHIVVKDHIRMSALTLKDIQYTDAGEYFCVASNPIGVDMQAMYFEVQYAPKIRGPVVVYTWEGNPVNITCDVLAHPSAAVSWFRDGQLLPSSNFSNIKIYNGPTFSSLEVNPDSENDFGNYNCSAVNSIGHESSEFILVQADTPSSPAIRKVEPYSSTVMIVFDEPDATGGVPILKYKAEWRVVGQEKWHARYYDAKEVSAESIITVTGLKPETSYMVKLSAVNGKGLGDSTPSQDFTTQPVKGEPSAPKLVGHLSEDGNSIKVDIIKQDDGGSPIRHYLVNYRALNAVDWKPEMRVPSNSHHVTLKTLEWNVDYEVIVVAENQQGKSKQARLSFRTTAKPTATTATSASTGLGTGAIVGILIVTFVLLLVVVDVTCFFLNKCGLLMCIAVNFCGKAGPGAKGKDIEEGKAAFSKDESKEPIVEVRTEEERTPNHDGSNQIEPNETTPLTEPEHPADSTATVEDMLPSVTTVTTNSDTITETFATAQNSPTSETTTLTSSTAPPPSTAPDSNTVQSVQATPSKAEVPTASSPPPTSSPKVAPLVDLSDTPTNNPSKAVANQAGALNPSAATSAAEPPTAIIKPVTTVPANTTSPPPTPEPKQVKQEQSGTKSPEKESAQPSTVKSPTEATKDESASLSNTKPLQGEDFQIDGGTFKTPEIDLAKDVFAALGTATPAAVASGKASELVSSTADTTVPPDSAKTEKTQVEENSKPEETDVKSTPAEVKTVPNEATQRNVNESKA.

A signal peptide spans 1-19; that stretch reads MLHIKDLIWTLYFIGAAVA. Ig-like C2-type domains lie at 20 to 108, 113 to 202, 208 to 295, 303 to 397, and 400 to 489; these read LEVN…GTVN, QKLT…KDIQ, PPLI…EAIV, PKMT…FEVQ, and PKIR…FILV. The Extracellular segment spans residues 20 to 705; it reads LEVNIVPDQG…ATSASTGLGT (686 aa). Cystine bridges form between C41–C93 and C136–C186. N82 carries an N-linked (GlcNAc...) asparagine glycan. Heparin is bound by residues 149-153 and 158-162; these read RHKGK and KKDVR. N219 carries N-linked (GlcNAc...) asparagine glycosylation. The cysteines at positions 232 and 282 are disulfide-linked. N-linked (GlcNAc...) asparagine glycosylation is found at N310, N341, N417, N443, and N472. A disulfide bridge links C323 with C379. C420 and C473 are disulfide-bonded. Fibronectin type-III domains are found at residues 493-592 and 595-691; these read TPSS…TQPV and EPSA…TAKP. The chain crosses the membrane as a helical span at residues 706 to 723; that stretch reads GAIVGILIVTFVLLLVVV. Residues 724-1092 lie on the Cytoplasmic side of the membrane; it reads DVTCFFLNKC…TQRNVNESKA (369 aa). Residues 754–784 show a composition bias toward basic and acidic residues; that stretch reads KDIEEGKAAFSKDESKEPIVEVRTEEERTPN. Disordered regions lie at residues 754–1005 and 1024–1092; these read KDIE…GGTF and TPAA…ESKA. Low complexity-rich tracts occupy residues 820-832 and 839-851; these read TTVT…ITET and SPTS…TSST. The segment covering 860–871 has biased composition (polar residues); it reads DSNTVQSVQATP. Over residues 917–929 the composition is skewed to low complexity; sequence PSAATSAAEPPTA. Residues 968–978 show a composition bias toward polar residues; sequence AQPSTVKSPTE. The segment covering 1050-1068 has biased composition (basic and acidic residues); that stretch reads AKTEKTQVEENSKPEETDV. Residues 1080–1092 show a composition bias toward polar residues; sequence NEATQRNVNESKA.

In terms of processing, polysialylated by ST8SIA2 and ST8SIA4. Polysialylation modulates cell interactions by confering both attractive and repulsive properties that are highly regulated by ST8SIA2 and ST8SIA4. Polysialylation is formed on a-2,3-linked sialic acid of core glycans.

Its subcellular location is the cell membrane. Its function is as follows. This protein is a cell adhesion molecule involved in neuron-neuron adhesion, neurite fasciculation, outgrowth of neurites, etc. This is Neural cell adhesion molecule 1-B from Xenopus laevis (African clawed frog).